The primary structure comprises 349 residues: Probable myosin light chain kinase DDB_G0275057 (349 aa).

Residues 1–33 (MGCFNSKEAGAGRPKTTTQQQQQATPEPTVTTA) form a disordered region. Residues 16-33 (TTTQQQQQATPEPTVTTA) are compositionally biased toward low complexity. Residues 56 to 313 (YVVGKELGRG…AKQCLDDLWL (258 aa)) enclose the Protein kinase domain. ATP is bound by residues 62 to 70 (LGRGAFSVV) and Lys-85. The active-site Proton acceptor is the Asp-178.

It belongs to the protein kinase superfamily. CAMK Ser/Thr protein kinase family. CaMK subfamily.

It carries out the reaction L-seryl-[myosin light chain] + ATP = O-phospho-L-seryl-[myosin light chain] + ADP + H(+). The catalysed reaction is L-threonyl-[myosin light chain] + ATP = O-phospho-L-threonyl-[myosin light chain] + ADP + H(+). Does not have a calmodulin-binding domain. Its function is as follows. May phosphorylate a specific serine in the N-terminus of a myosin light chain. This Dictyostelium discoideum (Social amoeba) protein is Probable myosin light chain kinase DDB_G0275057.